The chain runs to 1271 residues: Clustered mitochondria protein homolog (1271 aa).

TPR repeat units lie at residues 104–138 (RHKPYTLAAVYEHLNKFREVIGLHFIDRRAFELGE) and 502–535 (CYGLSTDGTKVYSDSQFHEALKPIAEAFHMKPHK). The Clu domain maps to 329 to 580 (DQSRPQLSIL…RSTPLDIDFI (252 aa)). The span at 729–763 (QEEKSKIEDNEKAIEEEKKEEKTEKKEEKEEKADE) shows a compositional bias: basic and acidic residues. The interval 729-783 (QEEKSKIEDNEKAIEEEKKEEKTEKKEEKEEKADEEKSENEEDKTKPEEPSKGVF) is disordered. TPR repeat units lie at residues 1067–1100 (ISSYINSAYFEAANSSYVNAFKLYEKALGDWDFV), 1109–1142 (VTTLTNLAEILAQLKITDKANRLFSAALELSEKI), and 1151–1184 (AMIHYRFAGTLVNENRFDEALGHFEKAHTTFSRH). The segment at 1212 to 1271 (QAKDKNKPKKVKAPPVPPQATTKKSKNKSKMAQTQISKLHLNSSTRFSSSSRVKPRLKKK) is disordered. Residues 1241 to 1253 (KMAQTQISKLHLN) are compositionally biased toward polar residues. The span at 1254–1263 (SSTRFSSSSR) shows a compositional bias: low complexity.

The protein belongs to the CLU family. In terms of assembly, may associate with the eukaryotic translation initiation factor 3 (eIF-3) complex.

It localises to the cytoplasm. Its function is as follows. mRNA-binding protein involved in proper cytoplasmic distribution of mitochondria. In Meyerozyma guilliermondii (strain ATCC 6260 / CBS 566 / DSM 6381 / JCM 1539 / NBRC 10279 / NRRL Y-324) (Yeast), this protein is Clustered mitochondria protein homolog.